A 391-amino-acid chain; its full sequence is Phosphoglycerate kinase (391 aa).

Residues Asp21–Asn23, Arg36, His59–Arg62, Arg113, and Arg146 each bind substrate. ATP is bound by residues Lys197, Glu319, and Gly345–Thr348.

This sequence belongs to the phosphoglycerate kinase family. In terms of assembly, monomer.

It localises to the cytoplasm. It catalyses the reaction (2R)-3-phosphoglycerate + ATP = (2R)-3-phospho-glyceroyl phosphate + ADP. Its pathway is carbohydrate degradation; glycolysis; pyruvate from D-glyceraldehyde 3-phosphate: step 2/5. This is Phosphoglycerate kinase from Shewanella denitrificans (strain OS217 / ATCC BAA-1090 / DSM 15013).